The chain runs to 315 residues: Protein OPG185 (315 aa).

Positions 1–16 (MARLPILLLLISLVYS) are cleaved as a signal peptide. Residues 17-121 (TPSPQTSKKI…NDTDKVDYEE (105 aa)) enclose the Ig-like V-type domain. At 17-279 (TPSPQTSKKI…SNYKTKDFVE (263 aa)) the chain is on the virion surface side. Cys-34 and Cys-103 are disulfide-bonded. Asn-37, Asn-69, Asn-112, and Asn-161 each carry an N-linked (GlcNAc...) asparagine; by host glycan. Polar residues predominate over residues 192–202 (INTVSASSGES). The segment at 192-214 (INTVSASSGESTTDETPEPITDK) is disordered. An N-linked (GlcNAc...) asparagine; by host glycan is attached at Asn-254. The chain crosses the membrane as a helical span at residues 280 to 303 (IFGITALIILSAVAIFCITYYIYN). Topologically, residues 304-315 (KRSRKYKTENKV) are intravirion.

It belongs to the orthopoxvirus OPG185 family. In terms of assembly, heterodimerizes with OPG040. The heterodimer OPG185-OPG040 interacts with components of the entry fusion complex OPG143 and OPG094. Heterodimer with C3/VPC protein; disulfide-linked. Post-translationally, glycosylated; contains phosphate and sulfate-substituted glycans. O-glycosylation is required for hemagglutination and hemadsorption activities of infected cell membranes.

It is found in the virion membrane. The protein localises to the host membrane. Its function is as follows. Prevents cell to cell fusion by interacting with and directing the viral OPG040 protein on the host plasma membrane. The OPG185-OPG040 complex associates with components of the entry fusion complex (EFC) presumably to avoid superinfection and syncytium formation. Via its interaction with C3/VCP protein, protects the infected cell and probably also the extracellular enveloped virus from complement attack. The protein is Protein OPG185 (OPG185) of Vaccinia virus (strain Tian Tan) (VACV).